Consider the following 166-residue polypeptide: Lipoprotein signal peptidase (166 aa).

3 consecutive transmembrane segments (helical) span residues Trp-12–Gln-32, Trp-70–Ser-90, and Ala-102–Val-122. Catalysis depends on residues Asp-123 and Asp-141. The chain crosses the membrane as a helical span at residues Phe-137–Leu-157.

Belongs to the peptidase A8 family.

It localises to the cell inner membrane. The enzyme catalyses Release of signal peptides from bacterial membrane prolipoproteins. Hydrolyzes -Xaa-Yaa-Zaa-|-(S,diacylglyceryl)Cys-, in which Xaa is hydrophobic (preferably Leu), and Yaa (Ala or Ser) and Zaa (Gly or Ala) have small, neutral side chains.. It participates in protein modification; lipoprotein biosynthesis (signal peptide cleavage). This protein specifically catalyzes the removal of signal peptides from prolipoproteins. The polypeptide is Lipoprotein signal peptidase (Salmonella typhi).